Consider the following 154-residue polypeptide: Interleukin-2 (154 aa).

The signal sequence occupies residues 1–20; the sequence is MYRMQLLSCIALSLALITNS. The O-linked (GalNAc...) threonine glycan is linked to Thr23. Cys78 and Cys126 are oxidised to a cystine.

It belongs to the IL-2 family.

The protein resides in the secreted. Functionally, cytokine produced by activated CD4-positive helper T-cells and to a lesser extend activated CD8-positive T-cells and natural killer (NK) cells that plays pivotal roles in the immune response and tolerance. Binds to a receptor complex composed of either the high-affinity trimeric IL-2R (IL2RA/CD25, IL2RB/CD122 and IL2RG/CD132) or the low-affinity dimeric IL-2R (IL2RB and IL2RG). Interaction with the receptor leads to oligomerization and conformation changes in the IL-2R subunits resulting in downstream signaling starting with phosphorylation of JAK1 and JAK3. In turn, JAK1 and JAK3 phosphorylate the receptor to form a docking site leading to the phosphorylation of several substrates including STAT5. This process leads to activation of several pathways including STAT, phosphoinositide-3-kinase/PI3K and mitogen-activated protein kinase/MAPK pathways. Functions as a T-cell growth factor and can increase NK-cell cytolytic activity as well. Promotes strong proliferation of activated B-cells and subsequently immunoglobulin production. Plays a pivotal role in regulating the adaptive immune system by controlling the survival and proliferation of regulatory T-cells, which are required for the maintenance of immune tolerance. Moreover, participates in the differentiation and homeostasis of effector T-cell subsets, including Th1, Th2, Th17 as well as memory CD8-positive T-cells. The polypeptide is Interleukin-2 (IL2) (Saimiri sciureus (Common squirrel monkey)).